The following is an 89-amino-acid chain: Small ribosomal subunit protein uS15 (89 aa).

The protein belongs to the universal ribosomal protein uS15 family. Part of the 30S ribosomal subunit. Forms a bridge to the 50S subunit in the 70S ribosome, contacting the 23S rRNA.

Its function is as follows. One of the primary rRNA binding proteins, it binds directly to 16S rRNA where it helps nucleate assembly of the platform of the 30S subunit by binding and bridging several RNA helices of the 16S rRNA. In terms of biological role, forms an intersubunit bridge (bridge B4) with the 23S rRNA of the 50S subunit in the ribosome. The protein is Small ribosomal subunit protein uS15 of Chlamydia abortus (strain DSM 27085 / S26/3) (Chlamydophila abortus).